Consider the following 151-residue polypeptide: MLP-like protein 329 (151 aa).

It belongs to the MLP family.

The chain is MLP-like protein 329 (MLP329) from Arabidopsis thaliana (Mouse-ear cress).